A 61-amino-acid polypeptide reads, in one-letter code: Beta-insect depressant toxin BotIT5 (61 aa).

The LCN-type CS-alpha/beta domain maps to 1-61 (DGYIRKRDGC…TWKSETNTCG (61 aa)). Intrachain disulfides connect cysteine 10-cysteine 60, cysteine 14-cysteine 35, cysteine 21-cysteine 42, and cysteine 25-cysteine 44. Position 61 is a glycine amide (glycine 61).

Belongs to the long (4 C-C) scorpion toxin superfamily. Sodium channel inhibitor family. Beta subfamily. Expressed by the venom gland.

The protein localises to the secreted. Its function is as follows. Depressant insect beta-toxins cause a transient contraction paralysis followed by a slow flaccid paralysis. They bind voltage-independently at site-4 of sodium channels (Nav) and shift the voltage of activation toward more negative potentials thereby affecting sodium channel activation and promoting spontaneous and repetitive firing. This toxin is active only on insects. The polypeptide is Beta-insect depressant toxin BotIT5 (Buthus occitanus tunetanus (Common European scorpion)).